Reading from the N-terminus, the 185-residue chain is Comitin (185 aa).

One can recognise a Bulb-type lectin domain in the interval 1-123 (MELLRQGEHL…YKQILYSSKP (123 aa)). Residues 138-185 (SGHPQSAYPPQQPGYGYPAQPGYPPQPGYPPQHGYPPQHGYPQQPGYY) form a disordered region. Positions 141–157 (PQSAYPPQQPGYGYPAQ) are enriched in low complexity. 5 consecutive repeat copies span residues 153–158 (GYPAQP), 159–164 (GYPPQP), 165–170 (GYPPQH), 171–176 (GYPPQH), and 177–182 (GYPQQP). Residues 153–182 (GYPAQPGYPPQPGYPPQHGYPPQHGYPQQP) form a 5 X 6 AA tandem repeats of G-Y-P-X-Q-[PH] region. Positions 158-171 (PGYPPQPGYPPQHG) are enriched in pro residues. Over residues 172 to 185 (YPPQHGYPQQPGYY) the composition is skewed to low complexity.

In terms of assembly, homodimer in solution. The N-terminus is blocked.

It is found in the golgi apparatus membrane. It localises to the endomembrane system. Its subcellular location is the cytoplasm. The protein resides in the cytoskeleton. In terms of biological role, may have a role in cell motility. It has high affinity for both G-actin and F-actin. Binds to vesicle membranes via mannose residues and, by way of its interaction with actin, links these membranes to the cytoskeleton. In Dictyostelium discoideum (Social amoeba), this protein is Comitin (comA).